A 430-amino-acid polypeptide reads, in one-letter code: BSD domain-containing protein 1 (430 aa).

2 positions are modified to phosphoserine: Ser92 and Ser166. In terms of domain architecture, BSD spans 146 to 198 (WLSQFCLEEKKGEISELLVGSPSIRALYTKMVPAAVSHSEFWHRYFYKVHQLE). Disordered regions lie at residues 247–298 (STFP…APEA) and 319–398 (LAVD…WEKD). Polar residues predominate over residues 276 to 291 (PSESSESISLVTQIAN). Residues 350-367 (PPARVETLREEAPTDLRV) are compositionally biased toward basic and acidic residues. Thr356 is modified (phosphothreonine). Residues 371–390 (NSDSGKSTPSNNGKKGSSTD) show a composition bias toward polar residues. A phosphoserine mark is found at Ser387, Ser388, and Ser418.

The sequence is that of BSD domain-containing protein 1 (BSDC1) from Homo sapiens (Human).